Consider the following 108-residue polypeptide: Large ribosomal subunit protein uL24 (108 aa).

Belongs to the universal ribosomal protein uL24 family. Part of the 50S ribosomal subunit.

In terms of biological role, one of two assembly initiator proteins, it binds directly to the 5'-end of the 23S rRNA, where it nucleates assembly of the 50S subunit. Its function is as follows. One of the proteins that surrounds the polypeptide exit tunnel on the outside of the subunit. The sequence is that of Large ribosomal subunit protein uL24 from Mycoplasma genitalium (strain ATCC 33530 / DSM 19775 / NCTC 10195 / G37) (Mycoplasmoides genitalium).